Reading from the N-terminus, the 454-residue chain is MQKPSIPKGMRDFSPVEMSRRNYIFDTIREVYELFGFNQIETPTMEMLSTLMGKYGEEGDRLLFKVLNSGDVLADFCAEELAEKNSLRFAAKACEKGLRYDLTVPFARYVVMHRNEINFPFKRYQIQPVWRADRPQKGRYREFYQCDGDVIGSDSLMNEVELIQIISEVFRRLGIRTRILLNNRKILSGIAEVVDEADRLTDITVAIDKLDKIGLDKVNDELRTKGFGEEAIERLRPFIEMKGDNREKLDRLKSALASSETGLKGIEELTYILDKVERVQLHSELMVDISLARGLSYYTGAILEVKALDAEMGSITGGGRYDNLTGIFGLEGMSGVGISFGADRIYDVMMQLDLFPAEKLTGTQLLFVNFSEEDADSLLPLIQKLREQGLRTELYPEPAKIKKQMSYANAANIPYVALVGENERAAGQVNLKNMLTGEQQMLPADAATIVAAIV.

It belongs to the class-II aminoacyl-tRNA synthetase family. Homodimer.

It is found in the cytoplasm. The catalysed reaction is tRNA(His) + L-histidine + ATP = L-histidyl-tRNA(His) + AMP + diphosphate + H(+). The polypeptide is Histidine--tRNA ligase (Porphyromonas gingivalis (strain ATCC BAA-308 / W83)).